We begin with the raw amino-acid sequence, 324 residues long: Lactonase drp35 (324 aa).

Residues glutamate 47, serine 109, glycine 111, aspartate 129, threonine 132, tyrosine 134, aspartate 137, asparagine 184, aspartate 235, and serine 236 each contribute to the Ca(2+) site. Aspartate 235 functions as the Proton donor in the catalytic mechanism.

Belongs to the SMP-30/CGR1 family. Ca(2+) is required as a cofactor.

The protein localises to the cytoplasm. Its function is as follows. Exhibits lactonase activity. Acts in cells with perturbed membrane integrity and is possibly related to the membrane homeostasis. The chain is Lactonase drp35 (drp35) from Staphylococcus aureus (strain MW2).